The sequence spans 162 residues: 6,7-dimethyl-8-ribityllumazine synthase (162 aa).

5-amino-6-(D-ribitylamino)uracil is bound by residues Phe-22, 56 to 58 (TFE), and 80 to 82 (AVI). Position 85–86 (85–86 (GT)) interacts with (2S)-2-hydroxy-3-oxobutyl phosphate. His-88 functions as the Proton donor in the catalytic mechanism. Met-113 contributes to the 5-amino-6-(D-ribitylamino)uracil binding site. Residue Arg-127 participates in (2S)-2-hydroxy-3-oxobutyl phosphate binding.

It belongs to the DMRL synthase family.

It catalyses the reaction (2S)-2-hydroxy-3-oxobutyl phosphate + 5-amino-6-(D-ribitylamino)uracil = 6,7-dimethyl-8-(1-D-ribityl)lumazine + phosphate + 2 H2O + H(+). It participates in cofactor biosynthesis; riboflavin biosynthesis; riboflavin from 2-hydroxy-3-oxobutyl phosphate and 5-amino-6-(D-ribitylamino)uracil: step 1/2. Catalyzes the formation of 6,7-dimethyl-8-ribityllumazine by condensation of 5-amino-6-(D-ribitylamino)uracil with 3,4-dihydroxy-2-butanone 4-phosphate. This is the penultimate step in the biosynthesis of riboflavin. This Anaeromyxobacter dehalogenans (strain 2CP-1 / ATCC BAA-258) protein is 6,7-dimethyl-8-ribityllumazine synthase.